We begin with the raw amino-acid sequence, 687 residues long: DNA ligase (687 aa).

NAD(+) is bound by residues 34 to 38 (DAEYD), 83 to 84 (SL), and E117. K119 acts as the N6-AMP-lysine intermediate in catalysis. NAD(+) is bound by residues R140, E182, K298, and K322. Residues C416, C419, C434, and C439 each contribute to the Zn(2+) site. Positions 609-687 (EARGPFAGKT…EEEFVRLLKE (79 aa)) constitute a BRCT domain.

The protein belongs to the NAD-dependent DNA ligase family. LigA subfamily. The cofactor is Mg(2+). It depends on Mn(2+) as a cofactor.

It catalyses the reaction NAD(+) + (deoxyribonucleotide)n-3'-hydroxyl + 5'-phospho-(deoxyribonucleotide)m = (deoxyribonucleotide)n+m + AMP + beta-nicotinamide D-nucleotide.. DNA ligase that catalyzes the formation of phosphodiester linkages between 5'-phosphoryl and 3'-hydroxyl groups in double-stranded DNA using NAD as a coenzyme and as the energy source for the reaction. It is essential for DNA replication and repair of damaged DNA. The polypeptide is DNA ligase (Anaeromyxobacter dehalogenans (strain 2CP-C)).